Consider the following 225-residue polypeptide: Large ribosomal subunit protein bL25 (225 aa).

The tract at residues 188–225 (EEIEEAEAEAQATDADTATDDSEQTSEEQAEENKEDKE) is disordered. The span at 204 to 217 (TATDDSEQTSEEQA) shows a compositional bias: acidic residues.

It belongs to the bacterial ribosomal protein bL25 family. CTC subfamily. As to quaternary structure, part of the 50S ribosomal subunit; part of the 5S rRNA/L5/L18/L25 subcomplex. Contacts the 5S rRNA. Binds to the 5S rRNA independently of L5 and L18.

In terms of biological role, this is one of the proteins that binds to the 5S RNA in the ribosome where it forms part of the central protuberance. The sequence is that of Large ribosomal subunit protein bL25 from Exiguobacterium sibiricum (strain DSM 17290 / CCUG 55495 / CIP 109462 / JCM 13490 / 255-15).